We begin with the raw amino-acid sequence, 233 residues long: Outer membrane protein MIP (233 aa).

The signal sequence occupies residues 1 to 20 (MKMKLVTAAIMGLAMSTAMA). The PPIase FKBP-type domain occupies 144-233 (SDTVTVEYTG…IHLISVKKAA (90 aa)).

Belongs to the FKBP-type PPIase family.

It is found in the cell outer membrane. The enzyme catalyses [protein]-peptidylproline (omega=180) = [protein]-peptidylproline (omega=0). Strongly inhibited by FK506 but is completely resistant to cyclosporin A. In terms of biological role, essential virulence factor associated with macrophage infectivity. Exhibits PPIase activity. This is Outer membrane protein MIP (mip) from Legionella longbeachae.